The chain runs to 1460 residues: Cilia- and flagella-associated protein 43 (1460 aa).

WD repeat units lie at residues 46-87 (EGRY…HLQC), 91-132 (VATV…RLVK), 184-221 (SKGHYFHSCVWGTEGLYCGAGRGQVVLLDELRTDMKNY), 303-342 (RRRSASDTVKLLVLGGLVVIVCLDGSLVTYDQDTNTAGHT), 428-468 (IFAC…DSAS), 529-569 (MRDH…MKLP), 589-628 (FGRGGITCLSVWNAAGGFVCGGNDSVVHLVPVGKSPIHYS), 911-951 (EIDP…VTEV), and 1129-1170 (NRRF…CRAV). 2 coiled-coil regions span residues 1170-1214 (VVEA…AEEA) and 1399-1446 (LGEH…LREA).

It belongs to the CFAP43 family.

Its subcellular location is the cell projection. The protein resides in the cilium. It localises to the flagellum. The protein localises to the cytoplasm. It is found in the cytoskeleton. Its subcellular location is the flagellum axoneme. Flagellar protein involved in flagellum axoneme organization and function. In Trypanosoma brucei brucei (strain 927/4 GUTat10.1), this protein is Cilia- and flagella-associated protein 43.